Consider the following 977-residue polypeptide: Protein bric-a-brac 1 (977 aa).

The segment at 1-97 (MASAQAETNV…RSSSVASPSS (97 aa)) is disordered. Over residues 34 to 43 (PKSNRSSPTQ) the composition is skewed to polar residues. Residues 44–69 (QEEKRIKSEDRTSPTGGAKDEDKESQ) show a composition bias toward basic and acidic residues. Low complexity predominate over residues 80–97 (SPVSSPQGRSSSVASPSS). The BTB domain maps to 127-192 (VDVTLACDGR…MYRGEINVSQ (66 aa)). 4 disordered regions span residues 221–249 (AAAAAASSERMPSSPKESTSTSRTEHDRE), 281–348 (ERQQ…GSTV), 362–434 (DMPS…RFPL), and 447–497 (SGLG…ADDL). The segment covering 316-330 (ERMELEQKERERQRD) has biased composition (basic and acidic residues). A compositionally biased stretch (low complexity) spans 372–396 (PLSRSSRPHSQSPQQQQAQQQGQLP). Residues 469–491 (GGGVGGGGVGGGGAGGVGSGGGS) show a composition bias toward gly residues. The 53-residue stretch at 559 to 611 (FRERGPLKSWRPETMAEAIFSVLKEGLSLSQAARKYDIPYPTFVLYANRVHNM) folds into the HTH psq-type domain. The segment at residues 569–614 (RPETMAEAIFSVLKEGLSLSQAARKYDIPYPTFVLYANRVHNMLGP) is a DNA-binding region (H-T-H motif). The segment at residues 621-632 (DLRPKGRGRPQR) is a DNA-binding region (a.T hook). 2 disordered regions span residues 772–900 (ASIS…LGDL) and 925–977 (VGAS…TTSE). Low complexity-rich tracts occupy residues 804–816 (MAVALHHQQQQQA), 838–853 (QQQQQQQQQHHQGGHQ), 862–872 (ASSSSSASSSS), and 925–966 (VGAS…SSGG).

In terms of tissue distribution, leg imaginal disk at the central region of the tarsus and in eye antenna disk at the basal cylinder.

Its subcellular location is the nucleus. Probably acts as a transcriptional regulator. Required for the specification of the tarsal segment. Also involved in antenna development. In Drosophila melanogaster (Fruit fly), this protein is Protein bric-a-brac 1 (bab1).